The sequence spans 425 residues: 2-oxoglutarate and iron-dependent oxygenase JMJD4 (425 aa).

Positions 141–300 (SRAFPEQDVY…IMWCFLQDEL (160 aa)) constitute a JmjC domain. H188, D190, and H268 together coordinate Fe cation.

This sequence belongs to the JMJD6 family. The cofactor is Fe(2+).

The protein localises to the cytoplasm. The enzyme catalyses L-lysyl-[protein] + 2-oxoglutarate + O2 = 4-hydroxy-L-lysyl-[protein] + succinate + CO2. Functionally, catalyzes the 2-oxoglutarate and iron-dependent C4-lysyl hydroxylation of ETF1 at 'Lys-63' thereby promoting the translational termination efficiency of ETF1. The protein is 2-oxoglutarate and iron-dependent oxygenase JMJD4 (JMJD4) of Gallus gallus (Chicken).